The chain runs to 525 residues: Vanin-like protein 2 (525 aa).

A signal peptide spans 1-27; the sequence is MAKNYWGFFLFCLALGLMLNLSQQASL. N-linked (GlcNAc...) asparagine glycans are attached at residues asparagine 20 and asparagine 61. Residues 33-303 enclose the CN hydrolase domain; the sequence is YTAGVVEFEP…RSIYVARVPK (271 aa). Glutamate 72 functions as the Proton acceptor in the catalytic mechanism. 3 N-linked (GlcNAc...) asparagine glycosylation sites follow: asparagine 99, asparagine 116, and asparagine 124. Residue lysine 167 is the Proton donor of the active site. Asparagine 176 is a glycosylation site (N-linked (GlcNAc...) asparagine). Cysteine 199 acts as the Nucleophile in catalysis. 3 N-linked (GlcNAc...) asparagine glycosylation sites follow: asparagine 333, asparagine 348, and asparagine 375.

The protein belongs to the carbon-nitrogen hydrolase superfamily. BTD/VNN family. In terms of tissue distribution, expressed in third instar larvae.

Its subcellular location is the secreted. The chain is Vanin-like protein 2 from Drosophila melanogaster (Fruit fly).